Consider the following 208-residue polypeptide: Pyridoxine/pyridoxamine 5'-phosphate oxidase (208 aa).

Residues 53–58 (RTVLLK), 68–69 (YS), Lys-75, and Gln-100 each bind FMN. Residue Lys-58 coordinates substrate. Positions 118, 122, and 126 each coordinate substrate. Residues 135-136 (QS) and Trp-180 contribute to the FMN site. Substrate is bound at residue 186–188 (RLH). Arg-190 serves as a coordination point for FMN.

Belongs to the pyridoxamine 5'-phosphate oxidase family. Homodimer. FMN is required as a cofactor.

It catalyses the reaction pyridoxamine 5'-phosphate + O2 + H2O = pyridoxal 5'-phosphate + H2O2 + NH4(+). It carries out the reaction pyridoxine 5'-phosphate + O2 = pyridoxal 5'-phosphate + H2O2. Its pathway is cofactor metabolism; pyridoxal 5'-phosphate salvage; pyridoxal 5'-phosphate from pyridoxamine 5'-phosphate: step 1/1. It participates in cofactor metabolism; pyridoxal 5'-phosphate salvage; pyridoxal 5'-phosphate from pyridoxine 5'-phosphate: step 1/1. In terms of biological role, catalyzes the oxidation of either pyridoxine 5'-phosphate (PNP) or pyridoxamine 5'-phosphate (PMP) into pyridoxal 5'-phosphate (PLP). The chain is Pyridoxine/pyridoxamine 5'-phosphate oxidase from Xylella fastidiosa (strain 9a5c).